Consider the following 645-residue polypeptide: Threonine--tRNA ligase (645 aa).

A TGS domain is found at 3 to 64 (DMINITFPDG…EQDGTITIVT (62 aa)). A catalytic region spans residues 247 to 544 (DHRKLGKELG…LLEEYKGAFP (298 aa)). Zn(2+) contacts are provided by C340, H391, and H521.

The protein belongs to the class-II aminoacyl-tRNA synthetase family. In terms of assembly, homodimer. The cofactor is Zn(2+).

The protein resides in the cytoplasm. It carries out the reaction tRNA(Thr) + L-threonine + ATP = L-threonyl-tRNA(Thr) + AMP + diphosphate + H(+). In terms of biological role, catalyzes the attachment of threonine to tRNA(Thr) in a two-step reaction: L-threonine is first activated by ATP to form Thr-AMP and then transferred to the acceptor end of tRNA(Thr). Also edits incorrectly charged L-seryl-tRNA(Thr). The polypeptide is Threonine--tRNA ligase (Halalkalibacterium halodurans (strain ATCC BAA-125 / DSM 18197 / FERM 7344 / JCM 9153 / C-125) (Bacillus halodurans)).